The following is a 186-amino-acid chain: Elongation factor P (186 aa).

It belongs to the elongation factor P family.

It is found in the cytoplasm. The protein operates within protein biosynthesis; polypeptide chain elongation. Its function is as follows. Involved in peptide bond synthesis. Stimulates efficient translation and peptide-bond synthesis on native or reconstituted 70S ribosomes in vitro. Probably functions indirectly by altering the affinity of the ribosome for aminoacyl-tRNA, thus increasing their reactivity as acceptors for peptidyl transferase. In Clostridium acetobutylicum (strain ATCC 824 / DSM 792 / JCM 1419 / IAM 19013 / LMG 5710 / NBRC 13948 / NRRL B-527 / VKM B-1787 / 2291 / W), this protein is Elongation factor P.